A 370-amino-acid polypeptide reads, in one-letter code: UDP-3-O-acylglucosamine N-acyltransferase (370 aa).

Histidine 252 acts as the Proton acceptor in catalysis. Residues 350–370 (AAGRQDGPAANAASSSAGDKA) are disordered. Residues 358–370 (AANAASSSAGDKA) show a composition bias toward low complexity.

It belongs to the transferase hexapeptide repeat family. LpxD subfamily. Homotrimer.

The catalysed reaction is a UDP-3-O-[(3R)-3-hydroxyacyl]-alpha-D-glucosamine + a (3R)-hydroxyacyl-[ACP] = a UDP-2-N,3-O-bis[(3R)-3-hydroxyacyl]-alpha-D-glucosamine + holo-[ACP] + H(+). It functions in the pathway bacterial outer membrane biogenesis; LPS lipid A biosynthesis. In terms of biological role, catalyzes the N-acylation of UDP-3-O-acylglucosamine using 3-hydroxyacyl-ACP as the acyl donor. Is involved in the biosynthesis of lipid A, a phosphorylated glycolipid that anchors the lipopolysaccharide to the outer membrane of the cell. The polypeptide is UDP-3-O-acylglucosamine N-acyltransferase (Paraburkholderia xenovorans (strain LB400)).